The sequence spans 156 residues: Ribonuclease pancreatic (156 aa).

The N-terminal stretch at 1 to 28 is a signal peptide; it reads MALEKSLALLPLLVLVLLVLGWVQPSLG. The span at 33–43 shows a compositional bias: basic and acidic residues; that stretch reads AQKFQRQHMDS. The tract at residues 33–52 is disordered; the sequence is AQKFQRQHMDSDGSPSSNPT. Substrate is bound by residues Lys-35 and Arg-38. His-40 acts as the Proton acceptor in catalysis. 4 disulfides stabilise this stretch: Cys-54–Cys-112, Cys-68–Cys-123, Cys-86–Cys-138, and Cys-93–Cys-100. N-linked (GlcNAc...) asparagine glycosylation occurs at Asn-62. Substrate contacts are provided by residues 69 to 73, Lys-94, and Arg-113; that span reads KPVNT. A glycan (N-linked (GlcNAc...) asparagine) is linked at Asn-116. The Proton donor role is filled by His-147.

It belongs to the pancreatic ribonuclease family. Monomer. Interacts with and forms tight 1:1 complexes with RNH1. Dimerization of two such complexes may occur. Interaction with RNH1 inhibits this protein.

It localises to the secreted. The catalysed reaction is an [RNA] containing cytidine + H2O = an [RNA]-3'-cytidine-3'-phosphate + a 5'-hydroxy-ribonucleotide-3'-[RNA].. It carries out the reaction an [RNA] containing uridine + H2O = an [RNA]-3'-uridine-3'-phosphate + a 5'-hydroxy-ribonucleotide-3'-[RNA].. In terms of biological role, endonuclease that catalyzes the cleavage of RNA on the 3' side of pyrimidine nucleotides. Acts on single-stranded and double-stranded RNA. In Saguinus oedipus (Cotton-top tamarin), this protein is Ribonuclease pancreatic (RNASE1).